The sequence spans 410 residues: Serine hydroxymethyltransferase (410 aa).

(6S)-5,6,7,8-tetrahydrofolate-binding positions include L119 and 123 to 125 (GHL). K228 carries the post-translational modification N6-(pyridoxal phosphate)lysine. (6S)-5,6,7,8-tetrahydrofolate is bound at residue 351 to 353 (SPF).

This sequence belongs to the SHMT family. As to quaternary structure, homodimer. It depends on pyridoxal 5'-phosphate as a cofactor.

The protein resides in the cytoplasm. The enzyme catalyses (6R)-5,10-methylene-5,6,7,8-tetrahydrofolate + glycine + H2O = (6S)-5,6,7,8-tetrahydrofolate + L-serine. It participates in one-carbon metabolism; tetrahydrofolate interconversion. It functions in the pathway amino-acid biosynthesis; glycine biosynthesis; glycine from L-serine: step 1/1. Its function is as follows. Catalyzes the reversible interconversion of serine and glycine with tetrahydrofolate (THF) serving as the one-carbon carrier. This reaction serves as the major source of one-carbon groups required for the biosynthesis of purines, thymidylate, methionine, and other important biomolecules. Also exhibits THF-independent aldolase activity toward beta-hydroxyamino acids, producing glycine and aldehydes, via a retro-aldol mechanism. This chain is Serine hydroxymethyltransferase, found in Alkaliphilus oremlandii (strain OhILAs) (Clostridium oremlandii (strain OhILAs)).